Consider the following 254-residue polypeptide: DNA repair protein RecO (254 aa).

Belongs to the RecO family.

Involved in DNA repair and RecF pathway recombination. This is DNA repair protein RecO from Gluconacetobacter diazotrophicus (strain ATCC 49037 / DSM 5601 / CCUG 37298 / CIP 103539 / LMG 7603 / PAl5).